Consider the following 694-residue polypeptide: MTDGNLSTSMNGVALMGILDGRPGDSLQELQHLSIKAVPRSLSVPDYGPTLKLGALEDRHSLQSVDSGIPTLEIGNPEPVPCSVVHVKRKQSESEIIPERAFQSACPLPSCTPSAPTGSEREQAVRKSSTFPRTGYDSVKLYSPTSKALSRSDDVSVCSVSSLGTELSTTLSVSNEDILDLMVTSNSSAIVTLENDDDPQFTDVTLSSIKETSDLHQQDCVAETEEGRKLRLLQPFSHFFTRNLLARKQNARLDRQRDLGWKLFGKVPLRETAQKDSKKTQKEYEDKAGRPSRPPSPKQNVRKNLDFEPLSTTALILEDRPANLPAKPAEEAQKHRQQYEEMVVQAKKRELKEAQRRKKQLEERCKVEESIGNAVLTWNNEILPNWETMWCSKKVRDLWWQGIPPSVRGKVWSLAIGNELNITHELFDICLARAKERWRSLSTGGSEVENEDAGFSAADREASLELIKLDISRTFPNLCIFQQGGPYHDMLHSILGAYTCYRPDVGYVQGMSFIAAVLILNLDTADAFIAFSNLLNKPCQMAFFRVDHGLMLTYFAAFEVFFEENLPKLFAHFKKNNLTADIYLIDWIFTLYSKSLPLDLACRIWDVFCRDGEEFLFRTALGILKLFEDILTRMDFIHSAQFLTRLPEDLPADDVFAAISTVQMQSRNKKWAQVLSALQKDSREMEEGSPSVRD.

Ser-92 carries the post-translational modification Phosphoserine. 2 disordered regions span residues Leu-108 to Thr-130 and Thr-272 to Leu-305. A compositionally biased stretch (basic and acidic residues) spans Thr-272–Gly-289. Phosphoserine is present on Ser-296. A Rab-GAP TBC domain is found at Gly-402–Gly-612.

Interacts with ULK1. May interact with RAB11A and RAB11B, but does not exhibit any GTPase-activating activity toward these proteins. Interacts with TRAPPC8. In terms of tissue distribution, pubMed:15758561 detected expression at the stage of sexual maturation in testis, mainly in the spermatocytes. No expression detected in the ovary, brain, heart, lung, liver and kidney. PubMed:15200410 detected expression in brain, heart, lung, liver, spleen and kidney but not in small intestine.

Its subcellular location is the golgi apparatus. The protein localises to the cis-Golgi network. It localises to the trans-Golgi network. Its function is as follows. Plays a role in the regulation of starvation-induced autophagosome formation. Together with the TRAPPIII complex, regulates a constitutive trafficking step from peripheral recycling endosomes to the early Golgi, maintaining the cycling pool of ATG9 required for initiation of autophagy. In Rattus norvegicus (Rat), this protein is TBC1 domain family member 14 (Tbc1d14).